A 976-amino-acid polypeptide reads, in one-letter code: Probable basic-leucine zipper transcription factor Q (976 aa).

Coiled-coil stretches lie at residues 57–110 and 136–287; these read AIDS…QYQQ and QQQQ…QQQQ. Residues 104–128 form a disordered region; that stretch reads YQQQYQQPYTTPSPPDQIDYNQQLS. Polar residues-rich tracts occupy residues 374–385 and 393–411; these read TNFNGTNNSTPN and KLSS…SPPS. The tract at residues 374 to 499 is disordered; it reads TNFNGTNNST…PIDSNGDFDL (126 aa). Composition is skewed to low complexity over residues 420–468 and 476–490; these read PKNN…FNNN and STTT…MTSP. In terms of domain architecture, bZIP spans 504 to 567; it reads EKKKSISRIN…GVEVMRPEPE (64 aa). A basic motif region spans residues 505–507; the sequence is KKK. The segment at 509-516 is leucine-zipper; it reads ISRINQNL. Over residues 855–938 the composition is skewed to low complexity; the sequence is ENQSNNFGNN…VNSNNNNFNN (84 aa). The tract at residues 855–957 is disordered; that stretch reads ENQSNNFGNN…SADAIPYPST (103 aa).

This sequence belongs to the bZIP family.

The protein localises to the nucleus. Its function is as follows. Probable transcriptional regulator. The polypeptide is Probable basic-leucine zipper transcription factor Q (bzpQ) (Dictyostelium discoideum (Social amoeba)).